A 201-amino-acid polypeptide reads, in one-letter code: NADH-quinone oxidoreductase subunit C (201 aa).

The protein belongs to the complex I 30 kDa subunit family. As to quaternary structure, NDH-1 is composed of 14 different subunits. Subunits NuoB, C, D, E, F, and G constitute the peripheral sector of the complex.

Its subcellular location is the cell inner membrane. The catalysed reaction is a quinone + NADH + 5 H(+)(in) = a quinol + NAD(+) + 4 H(+)(out). NDH-1 shuttles electrons from NADH, via FMN and iron-sulfur (Fe-S) centers, to quinones in the respiratory chain. The immediate electron acceptor for the enzyme in this species is believed to be ubiquinone. Couples the redox reaction to proton translocation (for every two electrons transferred, four hydrogen ions are translocated across the cytoplasmic membrane), and thus conserves the redox energy in a proton gradient. In Sinorhizobium medicae (strain WSM419) (Ensifer medicae), this protein is NADH-quinone oxidoreductase subunit C.